The primary structure comprises 328 residues: 5,10-methylenetetrahydromethanopterin reductase (328 aa).

This sequence belongs to the mer family.

The protein localises to the cytoplasm. It carries out the reaction 5-methyl-5,6,7,8-tetrahydromethanopterin + oxidized coenzyme F420-(gamma-L-Glu)(n) + H(+) = 5,10-methylenetetrahydromethanopterin + reduced coenzyme F420-(gamma-L-Glu)(n). It functions in the pathway one-carbon metabolism; methanogenesis from CO(2); methyl-coenzyme M from 5,10-methylene-5,6,7,8-tetrahydromethanopterin: step 1/2. Catalyzes the reversible reduction of methylene-H(4)MPT to methyl-H(4)MPT. The polypeptide is 5,10-methylenetetrahydromethanopterin reductase (Methanosarcina barkeri (strain Fusaro / DSM 804)).